The following is a 309-amino-acid chain: Aspartate carbamoyltransferase catalytic subunit (309 aa).

Positions 55 and 56 each coordinate carbamoyl phosphate. Residue Lys85 coordinates L-aspartate. The carbamoyl phosphate site is built by Arg106, His135, and Gln138. 2 residues coordinate L-aspartate: Arg168 and Arg230. 2 residues coordinate carbamoyl phosphate: Leu268 and Pro269.

Belongs to the aspartate/ornithine carbamoyltransferase superfamily. ATCase family. As to quaternary structure, heterododecamer (2C3:3R2) of six catalytic PyrB chains organized as two trimers (C3), and six regulatory PyrI chains organized as three dimers (R2).

It catalyses the reaction carbamoyl phosphate + L-aspartate = N-carbamoyl-L-aspartate + phosphate + H(+). It participates in pyrimidine metabolism; UMP biosynthesis via de novo pathway; (S)-dihydroorotate from bicarbonate: step 2/3. In terms of biological role, catalyzes the condensation of carbamoyl phosphate and aspartate to form carbamoyl aspartate and inorganic phosphate, the committed step in the de novo pyrimidine nucleotide biosynthesis pathway. The polypeptide is Aspartate carbamoyltransferase catalytic subunit (Photobacterium profundum (strain SS9)).